Consider the following 567-residue polypeptide: MRSSKYLLSTLKETPSDAEIVSHQLMLRAGMIRKVAAGLYTWTPTGLRVLRKVENVVREEMEAINALEILMPMVQPADLWQESGRWDDYGPELLRIKDRNQRDFLLGPTHEEIISQLVRKEVSSYKQLPLTLFQIQTKFRDEIRPRFGVMRAREFLMKDAYSFHLTDESLQKTYDDMYKAYCRIFERLGLDYRPVIADTGSIGGSHSHEFHVLASSGEDAIAFSDSSDYAANVEMAEALAPAGERPAPNQKVEKHEVQGDELAAVLQPLSVESQQATKSFIVKAADDIDSEYVQLVLRADHELNTVKAEKLAQVAAPLEILTETEKATGVEAPYIGVVNAKLPLLVDSSAAHLADFACGANENGQWLTGVNWKRDTGDFSVVDIRNVVAGDPSPCGQGKVKIARGIEVGHIFQLGKKYSDAMKVGVLSESGKHETLTMGCYGIGVSRIVAAAIEQNNDERGICWPEALAPFQVVIVPMNMHKSARVQEAAEKLYTDLKAQGIDVLFDDRKERPGVMFTDMELIGIPHQVVVGERNLDENQVEYQSRKGGEKQKINLDDCISFIQQQL.

Belongs to the class-II aminoacyl-tRNA synthetase family. ProS type 1 subfamily. As to quaternary structure, homodimer.

The protein localises to the cytoplasm. It catalyses the reaction tRNA(Pro) + L-proline + ATP = L-prolyl-tRNA(Pro) + AMP + diphosphate. In terms of biological role, catalyzes the attachment of proline to tRNA(Pro) in a two-step reaction: proline is first activated by ATP to form Pro-AMP and then transferred to the acceptor end of tRNA(Pro). As ProRS can inadvertently accommodate and process non-cognate amino acids such as alanine and cysteine, to avoid such errors it has two additional distinct editing activities against alanine. One activity is designated as 'pretransfer' editing and involves the tRNA(Pro)-independent hydrolysis of activated Ala-AMP. The other activity is designated 'posttransfer' editing and involves deacylation of mischarged Ala-tRNA(Pro). The misacylated Cys-tRNA(Pro) is not edited by ProRS. This is Proline--tRNA ligase from Idiomarina loihiensis (strain ATCC BAA-735 / DSM 15497 / L2-TR).